The chain runs to 274 residues: SWI/SNF chromatin-remodeling complex subunit snf30 (274 aa).

2 stretches are compositionally biased toward polar residues: residues 123-150 (TLSY…GTMQ) and 157-167 (PSLTRSDSVSS). The interval 123-167 (TLSYPPSNGDSSSYANGTDLHGNTGTMQQEEKANPSLTRSDSVSS) is disordered.

In terms of assembly, component of the SWI/SNF global transcription activator complex composed of at least arp9, arp42, snf5, snf22, snf30, sbf59, sol1, ssr1, ssr2, ssr3, ssr4 and tfg3.

It localises to the cytoplasm. Its subcellular location is the nucleus. Its function is as follows. Component of the SWI/SNF complex, an ATP-dependent chromatin remodeling complex, required for the positive and negative regulation of gene expression of a large number of genes. It changes chromatin structure by altering DNA-histone contacts within a nucleosome, leading eventually to a change in nucleosome position, thus facilitating or repressing binding of gene-specific transcription factors. In Schizosaccharomyces pombe (strain 972 / ATCC 24843) (Fission yeast), this protein is SWI/SNF chromatin-remodeling complex subunit snf30 (snf30).